The primary structure comprises 107 residues: Quaternary ammonium compound-resistance protein QacH (107 aa).

4 helical membrane-spanning segments follow: residues 1–21, 26–46, 57–77, and 84–104; these read MPYL…AFLK, FSKL…FYFL, ITYA…SVLI, and LISI…NTFG.

This sequence belongs to the drug/metabolite transporter (DMT) superfamily. Small multidrug resistance (SMR) (TC 2.A.7.1) family.

It localises to the cell membrane. Its function is as follows. Multidrug exporter. Is implicated for the resistance to bacteriocidal quaternary ammonium compounds. The sequence is that of Quaternary ammonium compound-resistance protein QacH (qacH) from Staphylococcus saprophyticus.